Here is a 156-residue protein sequence, read N- to C-terminus: Small ribosomal subunit protein uS7 (156 aa).

It belongs to the universal ribosomal protein uS7 family. In terms of assembly, part of the 30S ribosomal subunit. Contacts proteins S9 and S11.

One of the primary rRNA binding proteins, it binds directly to 16S rRNA where it nucleates assembly of the head domain of the 30S subunit. Is located at the subunit interface close to the decoding center, probably blocks exit of the E-site tRNA. This is Small ribosomal subunit protein uS7 from Prochlorococcus marinus (strain MIT 9312).